Reading from the N-terminus, the 352-residue chain is NAD(P)H pyrophosphatase NUDT13, mitochondrial (352 aa).

Residues 1–20 constitute a mitochondrion transit peptide; sequence MSLYCGIACRRKFFWCYRLL. The Nudix hydrolase domain maps to 196–323; the sequence is PQMAPVAITL…PYTQQQNGTF (128 aa). The Nudix box motif lies at 216–240; sequence RQSSFPKGMYSALAGFCDIGESVEE.

It belongs to the Nudix hydrolase family. It depends on Mg(2+) as a cofactor. Requires Mn(2+) as cofactor. Highly expressed in metastasis-suppressed chromosome 6 melanoma hybrids.

The protein localises to the mitochondrion. The enzyme catalyses NADH + H2O = reduced beta-nicotinamide D-ribonucleotide + AMP + 2 H(+). It carries out the reaction NAD(+) + H2O = beta-nicotinamide D-ribonucleotide + AMP + 2 H(+). It catalyses the reaction NADPH + H2O = reduced beta-nicotinamide D-ribonucleotide + adenosine 2',5'-bisphosphate + 2 H(+). NAD(P)H pyrophosphatase that hydrolyzes NADH into NMNH and AMP, and NADPH into NMNH and 2',5'-ADP. Has a marked preference for the reduced pyridine nucleotides. Does not show activity toward NAD-capped RNAs; the NAD-cap is an atypical cap present at the 5'-end of some RNAs. The polypeptide is NAD(P)H pyrophosphatase NUDT13, mitochondrial (Homo sapiens (Human)).